A 73-amino-acid polypeptide reads, in one-letter code: Protein kish (73 aa).

The first 21 residues, 1 to 21, serve as a signal peptide directing secretion; it reads MTAIFNFESLLFVILLTICTC. The Lumenal segment spans residues 22–52; it reads TYLHRQFPALLEKRKEGVTMVFWKCARIGER. Residues 53–73 traverse the membrane as a helical segment; that stretch reads ASPYISLFCVFMALRFIFGSS.

Belongs to the KISH family.

It is found in the golgi apparatus membrane. It localises to the endoplasmic reticulum membrane. Involved in the early part of the secretory pathway. This Schizosaccharomyces pombe (strain 972 / ATCC 24843) (Fission yeast) protein is Protein kish (ksh1).